A 316-amino-acid polypeptide reads, in one-letter code: DNA-directed RNA polymerase III subunit RPC6 (316 aa).

Alanine 2 bears the N-acetylalanine mark. Residues lysine 5 and lysine 7 each participate in a glycyl lysine isopeptide (Lys-Gly) (interchain with G-Cter in SUMO2) cross-link. [4Fe-4S] cluster contacts are provided by cysteine 287, cysteine 290, cysteine 296, and cysteine 307.

It belongs to the eukaryotic RPC34/RPC39 RNA polymerase subunit family. Component of the RNA polymerase III complex consisting of 17 subunits: a ten-subunit horseshoe-shaped catalytic core composed of POLR3A/RPC1, POLR3B/RPC2, POLR1C/RPAC1, POLR1D/RPAC2, POLR3K/RPC10, POLR2E/RPABC1, POLR2F/RPABC2, POLR2H/RPABC3, POLR2K/RPABC4 and POLR2L/RPABC5; a mobile stalk composed of two subunits POLR3H/RPC8 and CRCP/RPC9, protruding from the core and functioning primarily in transcription initiation; and additional subunits homologous to general transcription factors of the RNA polymerase II machinery, POLR3C/RPC3-POLR3F/RPC6-POLR3G/RPC7 heterotrimer required for transcription initiation and POLR3D/RPC4-POLR3E/RPC5 heterodimer involved in both transcription initiation and termination. Directly interacts with POLR3C. Interacts with TBP and TFIIIB90 and GTF3C4. Interacts with MAF1. As part of the RNA polymerase III complex, interacts with PKP2.

Its subcellular location is the nucleus. Its function is as follows. DNA-dependent RNA polymerase catalyzes the transcription of DNA into RNA using the four ribonucleoside triphosphates as substrates. Specific peripheric component of RNA polymerase III (Pol III) which synthesizes small non-coding RNAs including 5S rRNA, snRNAs, tRNAs and miRNAs from at least 500 distinct genomic loci. Part of POLR3C/RPC3-POLR3F/RPC6-POLR3G/RPC7 heterotrimer that coordinates the dynamics of Pol III stalk and clamp modules during the transition from apo to elongation state. Pol III plays a key role in sensing and limiting infection by intracellular bacteria and DNA viruses, including varicella zoster virus. Acts as a nuclear and cytosolic DNA sensor detecting AT-rich DNA, involved in innate immune response. Can sense non-self dsDNA that serves as template for transcription into dsRNA. The non-self RNA polymerase III transcripts, such as Epstein-Barr virus-encoded RNAs (EBERs) induce type I interferon and NF-kappa-B through the RIG-I pathway. Preferentially binds double-stranded DNA (dsDNA). The polypeptide is DNA-directed RNA polymerase III subunit RPC6 (Mus musculus (Mouse)).